Reading from the N-terminus, the 63-residue chain is Large ribosomal subunit protein bL28 (63 aa).

Belongs to the bacterial ribosomal protein bL28 family.

The sequence is that of Large ribosomal subunit protein bL28 from Clostridium perfringens (strain SM101 / Type A).